Here is a 69-residue protein sequence, read N- to C-terminus: Small, acid-soluble spore protein C4 (69 aa).

The protein belongs to the alpha/beta-type SASP family.

Its function is as follows. SASP are bound to spore DNA. They are double-stranded DNA-binding proteins that cause DNA to change to an a-like conformation. They protect the DNA backbone from chemical and enzymatic cleavage and are thus involved in dormant spore's high resistance to UV light. This Priestia megaterium (Bacillus megaterium) protein is Small, acid-soluble spore protein C4 (SASP-C4).